The following is a 754-amino-acid chain: FAD-dependent monooxygenase ntnA (754 aa).

The chain crosses the membrane as a helical span at residues 3 to 23 (IPFKVLIIGGGVAGLTLAIML). Residues Glu-34, Gly-48, and Arg-109 each coordinate FAD. Tyr-218 is a catalytic residue. Residues Asp-311 and Ala-324 each coordinate FAD. Transmembrane regions (helical) follow at residues 446-466 (PLATFSWVTVLILAASSPWLA), 486-506 (AEVLELYISILSVSISGMWVI), 536-556 (ILPIYICFYILSSQSVVYYYM), and 563-583 (LGVAKALLPALLVVYTVSAVC). Asn-586 is a glycosylation site (N-linked (GlcNAc...) asparagine). Residues 595-615 (SWWFTADFAFPVVAYLSGMFL) traverse the membrane as a helical segment. N-linked (GlcNAc...) asparagine glycosylation is present at Asn-616. 2 helical membrane passes run 644 to 664 (IAFVGFVAYAALASQYGTTIL) and 679 to 697 (LASLTTVTTLWCLYSAWEL). Asn-701 carries an N-linked (GlcNAc...) asparagine glycan. The chain crosses the membrane as a helical span at residues 712 to 732 (LTILSSTIFGGPAATLAGTFI).

It belongs to the paxM FAD-dependent monooxygenase family. FAD serves as cofactor.

It is found in the membrane. It functions in the pathway secondary metabolite biosynthesis; terpenoid biosynthesis. Its function is as follows. FAD-dependent monooxygenase; part of the gene cluster that mediates the biosynthesis of the meroterpenoids nectripenoids A and B, as well as cochliquninone D and isocochliquninone E. The pathway probably begins with the HR-PKS ntnH that catalyzes two chain-extension steps to form a reduced triketide, which then primes the SAT domain in the NR-PKS ntnG to initiate three more cycles of extension to give a linear hexaketide corresponding to the polyketide part of nectripenoids. The FAD-dependent monooxygenase ntnJ then performs an oxidative decarboxylation at C11 of the ntnH/ntnG product, via an electrophilic aromatic hydroxylation with concomitant ipso-decarboxylation. The membrane-bound polyprenyl transferase ntnF then introduces a farnesyl group before the FAD-dependent monooxygenase ntnK functions as the first epoxidase on terminal C12'-C13' olefin, followed by a second epoxidation on C7'-C8' catalyzed by ntnA. The terpene cyclase/mutase ntnI then initiates the sequential tricyclic ring formation through protonation of the terminal epoxide and catalyzes the regioselective and stereoselective 6/6/6-tricyclic ring formation. The cytochrome P450 monooxygenase ntnM may then hydroxylate C1'. The protein is FAD-dependent monooxygenase ntnA of Nectria sp.